The chain runs to 1676 residues: Protein TIC 214 (1676 aa).

The next 6 helical transmembrane spans lie at 24–44, 70–90, 93–113, 130–150, 170–190, and 218–238; these read KIIN…ALAL, LILG…YIAF, PYTL…GNNL, LEIL…TCIF, MVFL…VLMC, and FFLV…IQSL. Basic and acidic residues-rich tracts occupy residues 264 to 276 and 283 to 298; these read LKKS…GKST and SHEK…SKLE. Disordered stretches follow at residues 264–302, 546–610, 1123–1151, and 1372–1436; these read LKKS…NEDE, LVVF…SYSI, NKQS…NLIL, and QQQN…SEDD. Polar residues predominate over residues 562 to 586; sequence DSGNIQNKSSDKTINPQNNLTNSKT. Residues 597–610 show a composition bias toward basic and acidic residues; that stretch reads TTEKEPKDDKSYSI. Positions 1123 to 1138 are enriched in polar residues; the sequence is NKQSLQKGNSKGNSNL. The span at 1372-1390 shows a compositional bias: low complexity; sequence QQQNQTTTKINTETKNQQK. Residues 1384–1436 adopt a coiled-coil conformation; that stretch reads ETKNQQKNRVENEENKETENQQNAETKNKQKSKTENEENKETENQQNDESEDD. Composition is skewed to basic and acidic residues over residues 1391–1402 and 1409–1426; these read NRVENEENKETE and TKNK…KETE.

It belongs to the TIC214 family. Part of the Tic complex.

The protein resides in the plastid. It localises to the chloroplast inner membrane. Functionally, involved in protein precursor import into chloroplasts. May be part of an intermediate translocation complex acting as a protein-conducting channel at the inner envelope. In Cuscuta obtusiflora (Peruvian dodder), this protein is Protein TIC 214.